Here is a 225-residue protein sequence, read N- to C-terminus: UPF0758 protein XCV4028 (225 aa).

Residues 102–224 (ALSDPPSVGR…PVSFAERGWL (123 aa)) enclose the MPN domain. Zn(2+) contacts are provided by H173, H175, and D186. Residues 173-186 (HNHPSGNPEPSEAD) carry the JAMM motif motif.

Belongs to the UPF0758 family.

The protein is UPF0758 protein XCV4028 of Xanthomonas euvesicatoria pv. vesicatoria (strain 85-10) (Xanthomonas campestris pv. vesicatoria).